The sequence spans 723 residues: Nuclear intron maturase 3, mitochondrial (723 aa).

The N-terminal 26 residues, 1 to 26 (MVLRLRVHSFYNRGISFLVSSSLRNL), are a transit peptide targeting the mitochondrion. The tract at residues 532–597 (VSAPEELVRK…HYTKDLRVSD (66 aa)) is intron maturase type-2; degenerate. The THAP-type zinc finger occupies 646 to 700 (CAASFCERSDTIMHRVHLLQNRLHINPLDEEKWVPGMGTIHSALNRKCLPLCSTH).

Belongs to the plant nuclear intron maturase (nMat) family.

It localises to the mitochondrion. In terms of biological role, nuclear-encoded maturase required for splicing of group-II introns in mitochondria. Necessary for mitochondrial biogenesis during early developmental stages. The protein is Nuclear intron maturase 3, mitochondrial of Arabidopsis thaliana (Mouse-ear cress).